A 349-amino-acid chain; its full sequence is Selenide, water dikinase (349 aa).

Residue C17 is part of the active site. ATP contacts are provided by residues K20 and 48 to 50 (MAD). Residue D51 participates in Mg(2+) binding. ATP is bound by residues D68, D91, and 139–141 (GHS). D91 contacts Mg(2+). D227 lines the Mg(2+) pocket.

Belongs to the selenophosphate synthase 1 family. Class I subfamily. As to quaternary structure, homodimer. It depends on Mg(2+) as a cofactor.

It catalyses the reaction hydrogenselenide + ATP + H2O = selenophosphate + AMP + phosphate + 2 H(+). Its function is as follows. Synthesizes selenophosphate from selenide and ATP. This Rhizobium meliloti (strain 1021) (Ensifer meliloti) protein is Selenide, water dikinase.